A 253-amino-acid chain; its full sequence is Retinoic acid early-inducible protein 1-gamma (253 aa).

A signal peptide spans 1 to 28; sequence MAKAAVTKRHHFMIQKLLILLSYGYTNG. A disulfide bridge links C37 with C56. Residues N38, N70, N83, N143, and N156 are each glycosylated (N-linked (GlcNAc...) asparagine). C90 and C190 are disulfide-bonded. Positions 198 to 230 are disordered; it reads LKQSKEKPRSTSRSPSITQLTSTSPLPPPSHST. The segment covering 211-221 has biased composition (low complexity); that stretch reads SPSITQLTSTS. S227 carries the GPI-anchor amidated serine lipid modification. The propeptide at 228–253 is removed in mature form; the sequence is HSTSKKGFISVGLIFISLLFAFAFAM.

Belongs to the NKG2D ligand family. Glycosylated. Expressed predominantly in embryonic brain.

Its subcellular location is the cell membrane. Its function is as follows. Acts as a ligand for KLRK1. This chain is Retinoic acid early-inducible protein 1-gamma (Raet1c), found in Mus musculus (Mouse).